The sequence spans 216 residues: Somatotropin (216 aa).

The N-terminal stretch at 1 to 26 (MAAGSWTAGLLAFALLCLPWPQEASA) is a signal peptide. H45 lines the Zn(2+) pocket. Cysteines 78 and 189 form a disulfide. Position 131 is a phosphoserine (S131). E198 is a Zn(2+) binding site. The cysteines at positions 206 and 214 are disulfide-linked.

It belongs to the somatotropin/prolactin family.

The protein resides in the secreted. Its function is as follows. Plays an important role in growth control. Its major role in stimulating body growth is to stimulate the liver and other tissues to secrete IGF1. It stimulates both the differentiation and proliferation of myoblasts. It also stimulates amino acid uptake and protein synthesis in muscle and other tissues. The chain is Somatotropin (GH1) from Oryctolagus cuniculus (Rabbit).